The sequence spans 599 residues: Cytadherence high molecular weight protein 3 (599 aa).

Polar residues predominate over residues 220–236 (VQVDSGSQNHSFNNSPS). The disordered stretch occupies residues 220–241 (VQVDSGSQNHSFNNSPSLKPPL).

The protein resides in the cell projection. The protein localises to the attachment organelle membrane. Functionally, component of the cytoskeleton-like structure which stabilizes the shape of the wall-less mycoplasma. This cytoskeleton-like network of accessory proteins containing HMW proteins 1 to 5 allows the proper anchoring of cytadhesin proteins in the mycoplasmal membrane at the attachment organelle. Essential for successful surface parasitism. The chain is Cytadherence high molecular weight protein 3 (hmw3) from Mycoplasma genitalium (strain ATCC 33530 / DSM 19775 / NCTC 10195 / G37) (Mycoplasmoides genitalium).